The chain runs to 2367 residues: Probable G-protein coupled receptor 179 (2367 aa).

A signal peptide spans 1–25 (MGTRGAVMPPPMWGLLGCCFVCAWA). The Extracellular portion of the chain corresponds to 26-381 (LGGPRPIRSL…CLVEEAAVLR (356 aa)). The tract at residues 62 to 245 (YLYSGDAQQL…CQEGRLRPGW (184 aa)) is cache-like region. N-linked (GlcNAc...) asparagine glycosylation occurs at N75. C76 and C236 are disulfide-bonded. N298 carries an N-linked (GlcNAc...) asparagine glycan. A helical transmembrane segment spans residues 382–402 (AAVLACQACCMLAIFLSMLVS). The Cytoplasmic portion of the chain corresponds to 403 to 415 (YRCRRNKRIWASG). Residues 416 to 436 (VVLLETVLFGFLLLYFPVFIL) form a helical membrane-spanning segment. Residues 437 to 444 (YFKPSVFR) lie on the Extracellular side of the membrane. Residues 445–465 (CIALRWVRLLGFAIVYGTIIL) traverse the membrane as a helical segment. Cysteines 445 and 537 form a disulfide. The Cytoplasmic segment spans residues 466-493 (KLYRVLQLFLSRTAQRSALLSSGRLLRR). Residues 494–514 (LGLLLLPVLGFLAVWTVGALE) form a helical membrane-spanning segment. At 515–543 (RGIQHAPLVIRGHTPSGRHFYLCHHDRWD) the chain is on the extracellular side. Residues 544-564 (YIMVVAELLLLCWGSFLCYAT) traverse the membrane as a helical segment. Residues 565–575 (RAVLSAFHEPR) are Cytoplasmic-facing. Residues 576–594 (YMGIALHNELLLSAAFHTA) form a helical membrane-spanning segment. The Extracellular portion of the chain corresponds to 595-607 (RFVLVPSLHPDWT). A helical membrane pass occupies residues 608 to 628 (LLLFFFHTHSTVTTTLALIFI). The Cytoplasmic segment spans residues 629–2367 (PKFWKLGAPP…PPTVYPWDWE (1739 aa)). Disordered stretches follow at residues 731 to 818 (ARQH…FRSA), 869 to 932 (REER…PHPP), 1039 to 1083 (KSRA…QQGS), 1098 to 1198 (RSTY…AGKT), 1247 to 1431 (EVTE…CPWE), 1537 to 1557 (PRES…SSKA), 1577 to 1672 (DLRP…ERPQ), 1723 to 1757 (AIRK…PTPE), 1823 to 1852 (SEGT…KGRL), 1886 to 2108 (AQAP…GSVE), 2133 to 2212 (WEAG…KEAG), and 2308 to 2367 (GVRE…WDWE). Low complexity predominate over residues 738 to 759 (SGSPGHGSLPGSSRRRLLSSSL). Residues 773–782 (STYDQRREQD) show a composition bias toward basic and acidic residues. The segment covering 1039–1067 (KSRAGENEMDAEDAHHQREANDVDEDRPK) has biased composition (basic and acidic residues). The segment covering 1153–1164 (LQNQQNAHTSRM) has biased composition (polar residues). 4 stretches are compositionally biased toward basic and acidic residues: residues 1171–1181 (EGSREQEDRGR), 1277–1299 (RALR…KSEP), 1341–1362 (GRIR…EKPG), and 1390–1407 (EDGK…QEKQ). A compositionally biased stretch (basic and acidic residues) spans 1615–1639 (ESQKDKEKMPGKSEIEDVTAWEKPE). Basic and acidic residues-rich tracts occupy residues 1840 to 1851 (AEQREKALEKGR), 1903 to 1920 (AEGH…RQDP), 1970 to 1979 (SHLDRQRPDQ), 2023 to 2054 (VTER…KSEP), 2061 to 2070 (KKPEMADFRQ), and 2165 to 2180 (TEEH…REQE). Positions 2326–2340 (PEPSLQEAESQSSSL) are enriched in low complexity.

This sequence belongs to the G-protein coupled receptor 3 family. Homodimer. Associates with the R7 group RGS-GNB5 complexes, composed of an R7 group RGS subunit (RGS6, RGS7, RGS9 or RGS11) and GNB5, promoting their localization to the cell membrane and regulating the GTPase activator activity of R7 RGS proteins. Interacts with TRPM1. Interacts with GRM6. Interacts with EGFLAM; transsynaptic interaction is required for synaptic organization of photoreceptor cells. In terms of tissue distribution, expressed in the retina.

The protein resides in the cell membrane. It localises to the postsynaptic cell membrane. It is found in the cell projection. The protein localises to the dendrite. Functionally, orphan receptor involved in vision. Required for signal transduction through retinal depolarizing bipolar cells. Acts as an atypical G-protein coupled receptor that recruits and regulates the R7 group RGS-GNB5 complexes instead of activating G proteins: promotes the GTPase activator activity of R7 RGS proteins, increasing the GTPase activity of G protein alpha subunits, thereby driving them into their inactive GDP-bound form. Associates with components of metabotropic signaling cascade in retina ON-bipolar neurons, such as TRPM1 and GRM6: may control the ability of the GRM6 cascade to gate TRPM1. This Homo sapiens (Human) protein is Probable G-protein coupled receptor 179.